The following is a 367-amino-acid chain: Peptide chain release factor 2 (367 aa).

Position 250 is an N5-methylglutamine (Gln250).

Belongs to the prokaryotic/mitochondrial release factor family. Post-translationally, methylated by PrmC. Methylation increases the termination efficiency of RF2.

The protein resides in the cytoplasm. In terms of biological role, peptide chain release factor 2 directs the termination of translation in response to the peptide chain termination codons UGA and UAA. This chain is Peptide chain release factor 2, found in Mycobacteroides abscessus (strain ATCC 19977 / DSM 44196 / CCUG 20993 / CIP 104536 / JCM 13569 / NCTC 13031 / TMC 1543 / L948) (Mycobacterium abscessus).